Consider the following 415-residue polypeptide: Lupus La protein homolog (415 aa).

An HTH La-type RNA-binding domain is found at 7 to 99; that stretch reads NEKMAALEAK…RRSPSRPLPE (93 aa). 2 positions are modified to phosphoserine: Ser-92 and Ser-94. Residues 111 to 187 form the RRM domain; the sequence is RSVYIKGFPT…TNLLILFKED (77 aa). Residue Lys-116 is modified to N6-acetyllysine. Thr-120 bears the Phosphothreonine mark. N6-acetyllysine is present on residues Lys-128 and Lys-327. Positions 226 to 343 constitute a xRRM domain; the sequence is EGKMGCLLKF…HAARRFKGSH (118 aa). Residues 323–415 form a disordered region; the sequence is ESLNKWKSKG…KKRENGARDK (93 aa). Residues 328 to 341 show a composition bias toward basic residues; it reads WKSKGGHAARRFKG. Lys-356 carries the post-translational modification N6-acetyllysine. Residue Thr-377 is modified to Phosphothreonine. The span at 377–415 shows a compositional bias: basic and acidic residues; that stretch reads TRFDDDDHRRGPVKRGIDGRDREEPASKHKKRENGARDK.

As to quaternary structure, interacts with DDX15. May interact with RUFY1. Phosphorylated.

It localises to the nucleus. Binds to the 3' poly(U) terminus of nascent RNA polymerase III transcripts, protecting them from exonuclease digestion and facilitating their folding and maturation. This Rattus norvegicus (Rat) protein is Lupus La protein homolog (Ssb).